The following is a 315-amino-acid chain: DNA-directed RNA polymerase subunit alpha (315 aa).

Residues 1-228 (MLEIEKPKIE…EHFKLFMTLT (228 aa)) are alpha N-terminal domain (alpha-NTD). The alpha C-terminal domain (alpha-CTD) stretch occupies residues 245 to 315 (KEKVLEMAIE…LGLSLKQNED (71 aa)).

This sequence belongs to the RNA polymerase alpha chain family. As to quaternary structure, homodimer. The RNAP catalytic core consists of 2 alpha, 1 beta, 1 beta' and 1 omega subunit. When a sigma factor is associated with the core the holoenzyme is formed, which can initiate transcription.

The catalysed reaction is RNA(n) + a ribonucleoside 5'-triphosphate = RNA(n+1) + diphosphate. In terms of biological role, DNA-dependent RNA polymerase catalyzes the transcription of DNA into RNA using the four ribonucleoside triphosphates as substrates. The polypeptide is DNA-directed RNA polymerase subunit alpha (Clostridium kluyveri (strain NBRC 12016)).